A 606-amino-acid polypeptide reads, in one-letter code: Pyruvate decarboxylase 2 (606 aa).

Residues Asp68 and His155 each coordinate substrate. The tract at residues 433-515 is thiamine pyrophosphate binding; the sequence is DSWFNCQKLK…FLINNGGYTI (83 aa). 3 residues coordinate Mg(2+): Asp483, Asn510, and Gly512. Glu516 serves as a coordination point for substrate.

It belongs to the TPP enzyme family. In terms of assembly, homotetramer. It depends on a metal cation as a cofactor. The cofactor is thiamine diphosphate.

The catalysed reaction is a 2-oxocarboxylate + H(+) = an aldehyde + CO2. This Oryza sativa subsp. indica (Rice) protein is Pyruvate decarboxylase 2 (PDC2).